We begin with the raw amino-acid sequence, 338 residues long: Glycerol-3-phosphate dehydrogenase [NAD(P)+] (338 aa).

The NADPH site is built by Ser-14, Tyr-15, His-35, and Lys-109. 3 residues coordinate sn-glycerol 3-phosphate: Lys-109, Gly-138, and Thr-140. Ala-142 is a binding site for NADPH. Positions 194, 247, 257, 258, and 259 each coordinate sn-glycerol 3-phosphate. Catalysis depends on Lys-194, which acts as the Proton acceptor. Arg-258 serves as a coordination point for NADPH. 2 residues coordinate NADPH: Val-282 and Glu-284.

This sequence belongs to the NAD-dependent glycerol-3-phosphate dehydrogenase family.

The protein localises to the cytoplasm. It catalyses the reaction sn-glycerol 3-phosphate + NAD(+) = dihydroxyacetone phosphate + NADH + H(+). It carries out the reaction sn-glycerol 3-phosphate + NADP(+) = dihydroxyacetone phosphate + NADPH + H(+). Its pathway is membrane lipid metabolism; glycerophospholipid metabolism. Catalyzes the reduction of the glycolytic intermediate dihydroxyacetone phosphate (DHAP) to sn-glycerol 3-phosphate (G3P), the key precursor for phospholipid synthesis. The polypeptide is Glycerol-3-phosphate dehydrogenase [NAD(P)+] (Shewanella baltica (strain OS155 / ATCC BAA-1091)).